The following is a 418-amino-acid chain: UDP-N-acetylglucosamine 1-carboxyvinyltransferase (418 aa).

23-24 (KN) contacts phosphoenolpyruvate. Arg-93 contributes to the UDP-N-acetyl-alpha-D-glucosamine binding site. Asp-117 acts as the Proton donor in catalysis. Positions 305 and 327 each coordinate UDP-N-acetyl-alpha-D-glucosamine.

It belongs to the EPSP synthase family. MurA subfamily.

The protein localises to the cytoplasm. It catalyses the reaction phosphoenolpyruvate + UDP-N-acetyl-alpha-D-glucosamine = UDP-N-acetyl-3-O-(1-carboxyvinyl)-alpha-D-glucosamine + phosphate. Its pathway is cell wall biogenesis; peptidoglycan biosynthesis. In terms of biological role, cell wall formation. Adds enolpyruvyl to UDP-N-acetylglucosamine. The polypeptide is UDP-N-acetylglucosamine 1-carboxyvinyltransferase (Corynebacterium jeikeium (strain K411)).